A 643-amino-acid chain; its full sequence is MEDSSLDTLSIVNETDFPLYNNYTEPTIAPALIAVAPIAQYLATAIGKWAAKAAFSKVLSLIFPGSQPATMEKVRTEVETLINQKLSQDRVNILNAEYRGIIEVSDVFDAYIKQPGFTPATAKGYFLNLSGAIIQRLPQFEVQTYEGVSIALFTQMCTLHLTLLKDGILAGSAWGFTQADVDSFIKLFNQKVLDYRTRLMRMYTEEFGRLCKVSLKDGLTFRNMCNLYVFPFAEAWSLMRYEGLKLQSSLSLWDYVGVSIPVNYNEWGGLVYKLLMGEVNQRLTTVKFNYSFTNEPADIPARENIRGVHPIYDPSSGLTGWIGNGRTNNFNFADNNGNEIMEVRTQTFYQNPNNEPIAPRDIINQILTAPAPADLFFKNADINVKFTQWFQSTLYGWNIKLGTQTVLSSRTGTIPPNYLAYDGYYIRAISACPRGVSLAYNHDLTTLTYNRIEYDSPTTENIIVGFAPDNTKDFYSKKSHYLSETNDSYVIPALQFAEVSDRSFLEDTPDQATDGSIKFARTFISNEAKYSIRLNTGFNTATRYKLIIRVRVPYRLPAGIRVQSQNSGNNRMLGSFTANANPEWVDFVTDAFTFNDLGITTSSTNALFSISSDSLNSGEEWYLSQLFLVKESAFTTQINPLLK.

The protein belongs to the delta endotoxin family.

Functionally, promotes colloidosmotic lysis by binding to the midgut epithelial cells of mosquitos. The protein is Pesticidal crystal protein Cry11Aa (cry11Aa) of Bacillus thuringiensis subsp. israelensis.